The chain runs to 338 residues: Holliday junction branch migration complex subunit RuvB (338 aa).

The interval 4–186 is large ATPase domain (RuvB-L); the sequence is ADRLIAPDNP…FGITQRLEYY (183 aa). ATP-binding positions include Ile25, Arg26, Gly67, Lys70, Thr71, Thr72, 133 to 135, Arg176, Tyr186, and Arg223; that span reads EDY. Thr71 lines the Mg(2+) pocket. Positions 187 to 257 are small ATPAse domain (RuvB-S); sequence KVEDLQNIVQ…VADKALNMLD (71 aa). The interval 260–338 is head domain (RuvB-H); sequence AKGFDYMDRK…HFGIDKPSNR (79 aa). The DNA site is built by Arg296, Arg315, and Arg320.

It belongs to the RuvB family. Homohexamer. Forms an RuvA(8)-RuvB(12)-Holliday junction (HJ) complex. HJ DNA is sandwiched between 2 RuvA tetramers; dsDNA enters through RuvA and exits via RuvB. An RuvB hexamer assembles on each DNA strand where it exits the tetramer. Each RuvB hexamer is contacted by two RuvA subunits (via domain III) on 2 adjacent RuvB subunits; this complex drives branch migration. In the full resolvosome a probable DNA-RuvA(4)-RuvB(12)-RuvC(2) complex forms which resolves the HJ.

Its subcellular location is the cytoplasm. The catalysed reaction is ATP + H2O = ADP + phosphate + H(+). Functionally, the RuvA-RuvB-RuvC complex processes Holliday junction (HJ) DNA during genetic recombination and DNA repair, while the RuvA-RuvB complex plays an important role in the rescue of blocked DNA replication forks via replication fork reversal (RFR). RuvA specifically binds to HJ cruciform DNA, conferring on it an open structure. The RuvB hexamer acts as an ATP-dependent pump, pulling dsDNA into and through the RuvAB complex. RuvB forms 2 homohexamers on either side of HJ DNA bound by 1 or 2 RuvA tetramers; 4 subunits per hexamer contact DNA at a time. Coordinated motions by a converter formed by DNA-disengaged RuvB subunits stimulates ATP hydrolysis and nucleotide exchange. Immobilization of the converter enables RuvB to convert the ATP-contained energy into a lever motion, pulling 2 nucleotides of DNA out of the RuvA tetramer per ATP hydrolyzed, thus driving DNA branch migration. The RuvB motors rotate together with the DNA substrate, which together with the progressing nucleotide cycle form the mechanistic basis for DNA recombination by continuous HJ branch migration. Branch migration allows RuvC to scan DNA until it finds its consensus sequence, where it cleaves and resolves cruciform DNA. The sequence is that of Holliday junction branch migration complex subunit RuvB from Vibrio atlanticus (strain LGP32) (Vibrio splendidus (strain Mel32)).